The primary structure comprises 436 residues: Anaerobic glycerol-3-phosphate dehydrogenase subunit B (436 aa).

This sequence belongs to the anaerobic G-3-P dehydrogenase subunit B family. Composed of a catalytic GlpA/B dimer and of membrane bound GlpC. It depends on FMN as a cofactor.

The catalysed reaction is a quinone + sn-glycerol 3-phosphate = dihydroxyacetone phosphate + a quinol. Its pathway is polyol metabolism; glycerol degradation via glycerol kinase pathway; glycerone phosphate from sn-glycerol 3-phosphate (anaerobic route): step 1/1. Its function is as follows. Conversion of glycerol 3-phosphate to dihydroxyacetone. Uses fumarate or nitrate as electron acceptor. The chain is Anaerobic glycerol-3-phosphate dehydrogenase subunit B from Vibrio cholerae serotype O1 (strain ATCC 39315 / El Tor Inaba N16961).